The following is a 333-amino-acid chain: 4-hydroxyproline epimerase (333 aa).

The active-site Proton acceptor is the C90. Residues 91-92 (GH) and D249 each bind substrate. Residue C253 is the Proton donor of the active site. Position 254–255 (254–255 (GT)) interacts with substrate.

The protein belongs to the proline racemase family. Homodimer.

The catalysed reaction is trans-4-hydroxy-L-proline = cis-4-hydroxy-D-proline. Allows intracellular utilization of 4-hydroxyproline, one of the major constituents of host collagen, by converting 4-hydroxy-L-proline to 4-hydroxy-D-proline, which can be further metabolized by intracellular 4-hydroxy-D-proline oxidases. Strong B-cell mitogen. Plays an important role in the regulation of intra- and extracellular amino acid pools, allowing the bacterium to profit from host precursors and enzymatic pathways. This chain is 4-hydroxyproline epimerase, found in Brucella abortus (strain S19).